Consider the following 98-residue polypeptide: NADH-ubiquinone oxidoreductase chain 4L (98 aa).

3 consecutive transmembrane segments (helical) span residues 1 to 21, 29 to 49, and 61 to 81; these read MSLV…GLLM, SLLC…LIIL, and IILL…LVMV.

This sequence belongs to the complex I subunit 4L family. In terms of assembly, core subunit of respiratory chain NADH dehydrogenase (Complex I) which is composed of 45 different subunits.

Its subcellular location is the mitochondrion inner membrane. It carries out the reaction a ubiquinone + NADH + 5 H(+)(in) = a ubiquinol + NAD(+) + 4 H(+)(out). Core subunit of the mitochondrial membrane respiratory chain NADH dehydrogenase (Complex I) which catalyzes electron transfer from NADH through the respiratory chain, using ubiquinone as an electron acceptor. Part of the enzyme membrane arm which is embedded in the lipid bilayer and involved in proton translocation. The polypeptide is NADH-ubiquinone oxidoreductase chain 4L (MT-ND4L) (Hippopotamus amphibius (Hippopotamus)).